A 237-amino-acid chain; its full sequence is Indole-3-glycerol phosphate synthase (237 aa).

It belongs to the TrpC family.

The catalysed reaction is 1-(2-carboxyphenylamino)-1-deoxy-D-ribulose 5-phosphate + H(+) = (1S,2R)-1-C-(indol-3-yl)glycerol 3-phosphate + CO2 + H2O. It participates in amino-acid biosynthesis; L-tryptophan biosynthesis; L-tryptophan from chorismate: step 4/5. The protein is Indole-3-glycerol phosphate synthase of Thermoplasma volcanium (strain ATCC 51530 / DSM 4299 / JCM 9571 / NBRC 15438 / GSS1).